Here is a 250-residue protein sequence, read N- to C-terminus: AA9 family lytic polysaccharide monooxygenase AA17 (250 aa).

The first 21 residues, 1–21 (MAMSKIVSLTGLLASASLVAG), serve as a signal peptide directing secretion. Residues His-22 and His-107 each coordinate Cu(2+). 2 disulfides stabilise this stretch: Cys-77–Cys-199 and Cys-118–Cys-122. Residue Asn-159 is glycosylated (N-linked (GlcNAc...) asparagine). Residues His-185 and Gln-194 each coordinate O2. Residue Tyr-196 participates in Cu(2+) binding.

This sequence belongs to the polysaccharide monooxygenase AA9 family. Cu(2+) serves as cofactor.

The protein resides in the secreted. Functionally, lytic polysaccharide monooxygenase (LPMO) that exhibits oxidative cleavage beta-O-4 linkage of lignin resulting in the formation of aromatic compound guaiacol. Catalysis by LPMOs requires the reduction of the active-site copper from Cu(II) to Cu(I) by a reducing agent and H(2)O(2) or O(2) as a cosubstrate. Does not use cellulose, cello-oligosaccharides, xyloglucan, xylan, chitin nor starch as substrates. Able to depolymerize the lignin dimer guaicyl glycerol beta-guaicyl ether (GGE). This is AA9 family lytic polysaccharide monooxygenase AA17 from Aspergillus oryzae (strain ATCC 42149 / RIB 40) (Yellow koji mold).